The chain runs to 392 residues: Histidinol-phosphate aminotransferase 2 (392 aa).

Lys-228 is subject to N6-(pyridoxal phosphate)lysine.

It belongs to the class-II pyridoxal-phosphate-dependent aminotransferase family. Histidinol-phosphate aminotransferase subfamily. As to quaternary structure, homodimer. Requires pyridoxal 5'-phosphate as cofactor.

The catalysed reaction is L-histidinol phosphate + 2-oxoglutarate = 3-(imidazol-4-yl)-2-oxopropyl phosphate + L-glutamate. It participates in amino-acid biosynthesis; L-histidine biosynthesis; L-histidine from 5-phospho-alpha-D-ribose 1-diphosphate: step 7/9. This Nitrosospira multiformis (strain ATCC 25196 / NCIMB 11849 / C 71) protein is Histidinol-phosphate aminotransferase 2.